The primary structure comprises 195 residues: ATP-dependent Clp protease proteolytic subunit (195 aa).

The active-site Nucleophile is the Ser-96. His-121 is an active-site residue.

Belongs to the peptidase S14 family. Fourteen ClpP subunits assemble into 2 heptameric rings which stack back to back to give a disk-like structure with a central cavity, resembling the structure of eukaryotic proteasomes.

The protein localises to the cytoplasm. The catalysed reaction is Hydrolysis of proteins to small peptides in the presence of ATP and magnesium. alpha-casein is the usual test substrate. In the absence of ATP, only oligopeptides shorter than five residues are hydrolyzed (such as succinyl-Leu-Tyr-|-NHMec, and Leu-Tyr-Leu-|-Tyr-Trp, in which cleavage of the -Tyr-|-Leu- and -Tyr-|-Trp bonds also occurs).. Cleaves peptides in various proteins in a process that requires ATP hydrolysis. Has a chymotrypsin-like activity. Plays a major role in the degradation of misfolded proteins. The protein is ATP-dependent Clp protease proteolytic subunit of Elusimicrobium minutum (strain Pei191).